The primary structure comprises 543 residues: Ribosomal protein arginine N-methyltransferase rmt3 (543 aa).

The C2H2-type zinc-finger motif lies at 58 to 81; it reads FCCLFCDSTFTCLKDLWSHCKEAH. In terms of domain architecture, SAM-dependent MTase PRMT-type spans 217-543; sequence DSYYFESYAG…KADSQSYVLN (327 aa). S-adenosyl-L-homocysteine is bound by residues Arg-239, Gly-263, Asp-285, Ser-287, Ile-313, and Glu-314. Catalysis depends on residues Glu-329 and Glu-338.

It belongs to the class I-like SAM-binding methyltransferase superfamily. Protein arginine N-methyltransferase family. In terms of assembly, interacts with ef1a-c, rps2 and rps24. Note=Associates with the 40S ribosomal particle.

It is found in the cytoplasm. It localises to the cytosol. The catalysed reaction is L-arginyl-[protein] + S-adenosyl-L-methionine = N(omega)-methyl-L-arginyl-[protein] + S-adenosyl-L-homocysteine + H(+). The enzyme catalyses L-arginyl-[protein] + 2 S-adenosyl-L-methionine = N(omega),N(omega)-dimethyl-L-arginyl-[protein] + 2 S-adenosyl-L-homocysteine + 2 H(+). Its function is as follows. Methylates (mono and asymmetric dimethylation) the guanidino nitrogens of arginyl residues in ribosomal protein rps2. In Schizosaccharomyces pombe (strain 972 / ATCC 24843) (Fission yeast), this protein is Ribosomal protein arginine N-methyltransferase rmt3 (rmt3).